A 245-amino-acid polypeptide reads, in one-letter code: Orotidine 5'-phosphate decarboxylase (245 aa).

Substrate-binding positions include aspartate 22, lysine 44, 71–80 (DLKFHDIPNT), threonine 131, arginine 192, glutamine 201, glycine 221, and arginine 222. The active-site Proton donor is the lysine 73.

The protein belongs to the OMP decarboxylase family. Type 1 subfamily. Homodimer.

The enzyme catalyses orotidine 5'-phosphate + H(+) = UMP + CO2. It participates in pyrimidine metabolism; UMP biosynthesis via de novo pathway; UMP from orotate: step 2/2. In terms of biological role, catalyzes the decarboxylation of orotidine 5'-monophosphate (OMP) to uridine 5'-monophosphate (UMP). The chain is Orotidine 5'-phosphate decarboxylase from Escherichia coli O6:K15:H31 (strain 536 / UPEC).